Reading from the N-terminus, the 119-residue chain is Large ribosomal subunit protein bL20 (119 aa).

It belongs to the bacterial ribosomal protein bL20 family.

In terms of biological role, binds directly to 23S ribosomal RNA and is necessary for the in vitro assembly process of the 50S ribosomal subunit. It is not involved in the protein synthesizing functions of that subunit. In Teredinibacter turnerae (strain ATCC 39867 / T7901), this protein is Large ribosomal subunit protein bL20.